The chain runs to 405 residues: Argininosuccinate synthase (405 aa).

ATP is bound by residues 10–18 and A37; that span reads AYSGGLDTS. Residues Y88 and S93 each coordinate L-citrulline. Position 118 (G118) interacts with ATP. The L-aspartate site is built by T120, N124, and D125. N124 serves as a coordination point for L-citrulline. Residues R128, S179, S188, E264, and Y276 each contribute to the L-citrulline site.

Belongs to the argininosuccinate synthase family. Type 1 subfamily. As to quaternary structure, homotetramer.

The protein localises to the cytoplasm. The enzyme catalyses L-citrulline + L-aspartate + ATP = 2-(N(omega)-L-arginino)succinate + AMP + diphosphate + H(+). The protein operates within amino-acid biosynthesis; L-arginine biosynthesis; L-arginine from L-ornithine and carbamoyl phosphate: step 2/3. The sequence is that of Argininosuccinate synthase from Pseudomonas putida (strain GB-1).